We begin with the raw amino-acid sequence, 153 residues long: uncharacterized protein (153 aa).

Positions 19–46 are disordered; the sequence is EKSTRLEEDAMESEPLAGTKTRGRGRRR.

This is an uncharacterized protein from Homo sapiens (Human).